Here is a 51-residue protein sequence, read N- to C-terminus: MARYRCCRSKSRSRCRRRRRRCRRRRRRCCRRRRRRCCRRRRSYTIRCKKY.

Intrachain disulfides connect cysteine 7-cysteine 15 and cysteine 38-cysteine 48.

The protein belongs to the protamine P1 family. In terms of assembly, cross-linked by interchain disulfide bonds around the DNA-helix. Phosphorylated by SRPK1. Testis.

It is found in the nucleus. The protein localises to the chromosome. Functionally, protamines substitute for histones in the chromatin of sperm during the haploid phase of spermatogenesis. They compact sperm DNA into a highly condensed, stable and inactive complex. This is Sperm protamine P1 (Prm1) from Mus musculus (Mouse).